The following is a 276-amino-acid chain: 4-hydroxy-tetrahydrodipicolinate reductase (276 aa).

Residues 10–15 (GALGKM), D36, and 109–111 (GTT) contribute to the NAD(+) site. H165 acts as the Proton donor/acceptor in catalysis. H166 provides a ligand contact to (S)-2,3,4,5-tetrahydrodipicolinate. The Proton donor role is filled by K169. A (S)-2,3,4,5-tetrahydrodipicolinate-binding site is contributed by 175-176 (GT).

Belongs to the DapB family.

Its subcellular location is the cytoplasm. It catalyses the reaction (S)-2,3,4,5-tetrahydrodipicolinate + NAD(+) + H2O = (2S,4S)-4-hydroxy-2,3,4,5-tetrahydrodipicolinate + NADH + H(+). It carries out the reaction (S)-2,3,4,5-tetrahydrodipicolinate + NADP(+) + H2O = (2S,4S)-4-hydroxy-2,3,4,5-tetrahydrodipicolinate + NADPH + H(+). It participates in amino-acid biosynthesis; L-lysine biosynthesis via DAP pathway; (S)-tetrahydrodipicolinate from L-aspartate: step 4/4. Catalyzes the conversion of 4-hydroxy-tetrahydrodipicolinate (HTPA) to tetrahydrodipicolinate. The chain is 4-hydroxy-tetrahydrodipicolinate reductase from Prochlorococcus marinus (strain SARG / CCMP1375 / SS120).